A 39-amino-acid polypeptide reads, in one-letter code: Cytochrome b6-f complex subunit 5 (39 aa).

Residues 5–25 (LLCGIVLGLVPITIVGLFVSA) traverse the membrane as a helical segment.

The protein belongs to the PetG family. As to quaternary structure, the 4 large subunits of the cytochrome b6-f complex are cytochrome b6, subunit IV (17 kDa polypeptide, PetD), cytochrome f and the Rieske protein, while the 4 small subunits are PetG, PetL, PetM and PetN. The complex functions as a dimer.

It is found in the cellular thylakoid membrane. Its function is as follows. Component of the cytochrome b6-f complex, which mediates electron transfer between photosystem II (PSII) and photosystem I (PSI), cyclic electron flow around PSI, and state transitions. PetG is required for either the stability or assembly of the cytochrome b6-f complex. This chain is Cytochrome b6-f complex subunit 5, found in Prochlorococcus marinus (strain MIT 9211).